Here is a 131-residue protein sequence, read N- to C-terminus: uncharacterized protein (131 aa).

A disordered region spans residues methionine 1–tyrosine 67. Position 14 is a phosphoserine (serine 14). Residues valine 99–valine 119 form a helical membrane-spanning segment.

The protein belongs to the FAM241 family.

Its subcellular location is the membrane. This is an uncharacterized protein from Mus musculus (Mouse).